The primary structure comprises 519 residues: Putative cytochrome P450 CYP13A1 (519 aa).

Position 465 (cysteine 465) interacts with heme.

This sequence belongs to the cytochrome P450 family. Requires heme as cofactor.

Its function is as follows. Cytochromes P450 are a group of heme-thiolate monooxygenases. They oxidize a variety of structurally unrelated compounds, including steroids, fatty acids, and xenobiotics. The chain is Putative cytochrome P450 CYP13A1 (cyp-13A1) from Caenorhabditis elegans.